Here is a 265-residue protein sequence, read N- to C-terminus: Protein HesA, vegetative (265 aa).

This sequence belongs to the HesA/MoeB/ThiF family.

The sequence is that of Protein HesA, vegetative (hesA2) from Trichormus variabilis (strain ATCC 29413 / PCC 7937) (Anabaena variabilis).